The primary structure comprises 299 residues: MLRLFYFSAIIASVILNFVGIIMNLFITVVNCKTWVKSHRISSSDRILFSLGITRFLMLGLFLVNTIYFVSSNTERSVYLSAFFVLCFMFLDSSSVWFVTLLNILYCVKITNFQHSVFLLLKRNISPKIPRLLLACVLISAFTTCLYITLSQASPFPELVTTRNNTSFNISEGILSLVVSLVLSSSLQFIINVTSASLLIHSLRRHIQKMQKNATGFWNPQTEAHVGAMKLMVYFLILYIPYSVATLVQYLPFYAGMDMGTKSICLIFATLYSPGHSVLIIITHPKLKTTAKKILCFKK.

The Extracellular portion of the chain corresponds to methionine 1–alanine 9. The helical transmembrane segment at isoleucine 10 to valine 30 threads the bilayer. Residues asparagine 31–arginine 46 are Cytoplasmic-facing. The helical transmembrane segment at isoleucine 47–isoleucine 67 threads the bilayer. The Extracellular portion of the chain corresponds to tyrosine 68–serine 81. The chain crosses the membrane as a helical span at residues alanine 82–leucine 102. At asparagine 103 to arginine 131 the chain is on the cytoplasmic side. Residues leucine 132 to glutamine 152 traverse the membrane as a helical segment. Residues alanine 153–glutamate 172 lie on the Extracellular side of the membrane. Residues asparagine 164, asparagine 165, and asparagine 169 are each glycosylated (N-linked (GlcNAc...) asparagine). The helical transmembrane segment at glycine 173–valine 193 threads the bilayer. Residues threonine 194–lysine 230 lie on the Cytoplasmic side of the membrane. Residues leucine 231 to leucine 251 traverse the membrane as a helical segment. Topologically, residues proline 252 to lysine 262 are extracellular. The helical transmembrane segment at serine 263–threonine 283 threads the bilayer. At histidine 284–lysine 299 the chain is on the cytoplasmic side.

This sequence belongs to the G-protein coupled receptor T2R family. Expressed in subsets of taste receptor cells of the tongue and palate epithelium and exclusively in gustducin-positive cells. Expressed on airway ciliated epithelium.

It localises to the membrane. Its subcellular location is the cell projection. The protein localises to the cilium membrane. Functionally, gustducin-coupled receptor for denatonium and N(6)-propyl-2-thiouracil implicated in the perception of bitter compounds in the oral cavity and the gastrointestinal tract. Signals through PLCB2 and the calcium-regulated cation channel TRPM5. In airway epithelial cells, binding of denatonium increases the intracellular calcium ion concentration and stimulates ciliary beat frequency. The polypeptide is Taste receptor type 2 member 4 (TAS2R4) (Homo sapiens (Human)).